Here is a 41-residue protein sequence, read N- to C-terminus: U3-theraphotoxin-Hs1a (41 aa).

Intrachain disulfides connect Cys-2–Cys-16, Cys-9–Cys-37, and Cys-17–Cys-40.

This sequence belongs to the neurotoxin 14 (magi-1) family. 01 (HNTX-16) subfamily. As to expression, expressed by the venom gland.

Its subcellular location is the secreted. Intracerebroventricular injection paralyzes mice. Has no effect on voltage-gated sodium currents. This is U3-theraphotoxin-Hs1a from Cyriopagopus schmidti (Chinese bird spider).